The primary structure comprises 80 residues: Toxin Acra I-3 (80 aa).

The signal sequence occupies residues 1–22 (MMKLVLLSVIVILFSLIGSIHG). The LCN-type CS-alpha/beta domain occupies 25 to 80 (VPGNYPLDSSGNKYPCTVLGDNQSCIDVCKKHGVKYGYCYGFKCWCEYLKDKNVSL). 3 disulfide bridges follow: Cys40/Cys63, Cys49/Cys68, and Cys53/Cys70.

It belongs to the long (3 C-C) scorpion toxin superfamily. Sodium/Potassium channel inhibitor family. As to expression, expressed by the venom gland.

The protein resides in the secreted. Its function is as follows. Probable neurotoxin that inhibits ion channels. Is toxic to mice. The protein is Toxin Acra I-3 of Androctonus crassicauda (Arabian fat-tailed scorpion).